The sequence spans 538 residues: Bifunctional purine biosynthesis protein PurH (538 aa).

Residues Phe8–Thr158 enclose the MGS-like domain.

The protein belongs to the PurH family.

The enzyme catalyses (6R)-10-formyltetrahydrofolate + 5-amino-1-(5-phospho-beta-D-ribosyl)imidazole-4-carboxamide = 5-formamido-1-(5-phospho-D-ribosyl)imidazole-4-carboxamide + (6S)-5,6,7,8-tetrahydrofolate. The catalysed reaction is IMP + H2O = 5-formamido-1-(5-phospho-D-ribosyl)imidazole-4-carboxamide. The protein operates within purine metabolism; IMP biosynthesis via de novo pathway; 5-formamido-1-(5-phospho-D-ribosyl)imidazole-4-carboxamide from 5-amino-1-(5-phospho-D-ribosyl)imidazole-4-carboxamide (10-formyl THF route): step 1/1. Its pathway is purine metabolism; IMP biosynthesis via de novo pathway; IMP from 5-formamido-1-(5-phospho-D-ribosyl)imidazole-4-carboxamide: step 1/1. This is Bifunctional purine biosynthesis protein PurH from Bartonella henselae (strain ATCC 49882 / DSM 28221 / CCUG 30454 / Houston 1) (Rochalimaea henselae).